A 387-amino-acid chain; its full sequence is Acetylserotonin O-methyltransferase (387 aa).

Residues Tyr153, Trp170, Glu216, 246-248 (GDF), and Arg263 contribute to the S-adenosyl-L-methionine site. His266 serves as the catalytic Proton donor/acceptor. Substrate-binding residues include Asp267 and Gln317. Positions 355 to 387 (ARGGGAGARSDGGGGEATSQTGSGTGREVGAQD) are disordered. Positions 356-370 (RGGGAGARSDGGGGE) are enriched in gly residues.

It belongs to the class I-like SAM-binding methyltransferase superfamily. Cation-independent O-methyltransferase family. As to quaternary structure, homodimer.

It carries out the reaction N-acetylserotonin + S-adenosyl-L-methionine = melatonin + S-adenosyl-L-homocysteine + H(+). It functions in the pathway aromatic compound metabolism; melatonin biosynthesis; melatonin from serotonin: step 1/2. Catalyzes the transfer of a methyl group onto N-acetylserotonin, producing melatonin (N-acetyl-5-methoxytryptamine). This Mus musculus molossinus (Japanese house mouse) protein is Acetylserotonin O-methyltransferase (Asmt).